A 470-amino-acid polypeptide reads, in one-letter code: UDP-N-acetylmuramate--L-alanine ligase (470 aa).

114–120 serves as a coordination point for ATP; that stretch reads GTHGKTT.

This sequence belongs to the MurCDEF family.

It is found in the cytoplasm. The enzyme catalyses UDP-N-acetyl-alpha-D-muramate + L-alanine + ATP = UDP-N-acetyl-alpha-D-muramoyl-L-alanine + ADP + phosphate + H(+). Its pathway is cell wall biogenesis; peptidoglycan biosynthesis. In terms of biological role, cell wall formation. This Xanthobacter autotrophicus (strain ATCC BAA-1158 / Py2) protein is UDP-N-acetylmuramate--L-alanine ligase.